The following is a 266-amino-acid chain: Signal peptidase I (266 aa).

The Cytoplasmic portion of the chain corresponds to 1-20 (MQTDNTKSNTNKTAKQEWWS). Residues 21–41 (CAFVICIALLIRILIMEPFTV) form a helical membrane-spanning segment. At 42–266 (PTGSMKATIL…IFRNLYNTDE (225 aa)) the chain is on the periplasmic side. Active-site residues include S45 and K108.

This sequence belongs to the peptidase S26 family.

Its subcellular location is the cell inner membrane. The enzyme catalyses Cleavage of hydrophobic, N-terminal signal or leader sequences from secreted and periplasmic proteins.. This is Signal peptidase I (lepB) from Rickettsia akari (strain Hartford).